A 210-amino-acid chain; its full sequence is Acyl-homoserine-lactone synthase (210 aa).

This sequence belongs to the autoinducer synthase family.

It carries out the reaction a fatty acyl-[ACP] + S-adenosyl-L-methionine = an N-acyl-L-homoserine lactone + S-methyl-5'-thioadenosine + holo-[ACP] + H(+). Its function is as follows. Required for the synthesis of OHHL (N-(3-oxohexanoyl)-L-homoserine lactone), an autoinducer molecule which binds to EsaR. OHHL is necessary for biosynthesis of EPS virulence factor (extracellular heteropolysaccharide) which plays a role in the development of Stewart's wilt on sweet corn. The chain is Acyl-homoserine-lactone synthase (esaI) from Pantoea stewartii subsp. stewartii (Erwinia stewartii).